The following is a 349-amino-acid chain: NADH-ubiquinone oxidoreductase chain 2 (349 aa).

9 consecutive transmembrane segments (helical) span residues 3–23 (PYVLTILLSSLGLGTVLTFAS), 66–86 (AAAMILFASTTNAWLVGEWEI), 98–118 (VMLALALKLGLAPVHFWLPEV), 139–159 (FALMIQVAPTINSSLLVTIGL), 178–198 (ILAYLPIAHLGWMVLILQFAP), 199–219 (SLTLLSLSLYIVMTSSAFLTL), 240–260 (LAALTALVLLSLGGLPPLSGF), 274–294 (GLPLSATLAAMTALLSLYFYL), and 319–339 (FTMITLPLSITTIMALGLLPL).

This sequence belongs to the complex I subunit 2 family.

The protein resides in the mitochondrion inner membrane. The catalysed reaction is a ubiquinone + NADH + 5 H(+)(in) = a ubiquinol + NAD(+) + 4 H(+)(out). In terms of biological role, core subunit of the mitochondrial membrane respiratory chain NADH dehydrogenase (Complex I) that is believed to belong to the minimal assembly required for catalysis. Complex I functions in the transfer of electrons from NADH to the respiratory chain. The immediate electron acceptor for the enzyme is believed to be ubiquinone. In Oncorhynchus mykiss (Rainbow trout), this protein is NADH-ubiquinone oxidoreductase chain 2 (MT-ND2).